The sequence spans 97 residues: Small cell adhesion glycoprotein (97 aa).

Residues 1-36 are Extracellular-facing; that stretch reads MNNLPATPSPEELMTTPVFQAPETMSPQAEEASTAL. Threonine 7 carries an O-linked (GalNAc...) threonine glycan. Serine 9 is a glycosylation site (O-linked (GalNAc...) serine). Threonine 15, threonine 16, and threonine 24 each carry an O-linked (GalNAc...) threonine glycan. Serine 26 carries an O-linked (GalNAc...) serine glycan. Residues 37–57 form a helical; Signal-anchor for type III membrane protein membrane-spanning segment; it reads IAVVITVVFLTLLSVVTLIFF. The Cytoplasmic portion of the chain corresponds to 58–97; it reads YLYKNKGSYVTYEPAEGEPSAILQMETDSAKGKEKEEYFI.

This sequence belongs to the SMAGP family. In terms of processing, O-glycosylated. The O-glycan is modified with sialic acid residues. In terms of tissue distribution, detected in brain (at protein level). Highly expressed in kidney and placenta. Detected in skin, breast, heart, lung, liver, prostate, spleen, small intestine, colon and stomach.

It is found in the cell membrane. It localises to the cytoplasmic vesicle membrane. In terms of biological role, may play a role in epithelial cell-cell contacts. May play a role in tumor invasiveness and metastasis formation. This chain is Small cell adhesion glycoprotein (Smagp), found in Rattus norvegicus (Rat).